A 435-amino-acid chain; its full sequence is Antho-RFamide neuropeptides type 1 (435 aa).

The N-terminal stretch at 1–22 (MTTVSYVTILLTVLVQVLTSDA) is a signal peptide. Residues 23–193 (KATNNKRELS…SVPGRYGREL (171 aa)) constitute a propeptide that is removed on maturation. Pyrrolidone carboxylic acid is present on Q194. Position 197 is a phenylalanine amide (F197). The propeptide occupies 199–201 (REL). F205 carries the phenylalanine amide modification. A propeptide spanning residues 207 to 209 (REA) is cleaved from the precursor. F213 carries the post-translational modification Phenylalanine amide. A propeptide spanning residues 215-217 (REL) is cleaved from the precursor. A Phenylalanine amide modification is found at F221. The propeptide occupies 223 to 225 (REF). F229 is subject to Phenylalanine amide. Over residues 230–371 (GREDQGRFGR…EDIAEADQGR (142 aa)) the composition is skewed to basic and acidic residues. 2 disordered regions span residues 230-374 (GRED…RFGR) and 386-435 (AKKR…AKTS). A propeptide spanning residues 231–233 (RED) is cleaved from the precursor. F237 carries the phenylalanine amide modification. Residues 239–241 (RED) constitute a propeptide that is removed on maturation. Phenylalanine amide is present on F245. A propeptide spanning residues 247 to 249 (RED) is cleaved from the precursor. F253 carries the post-translational modification Phenylalanine amide. The propeptide occupies 255–257 (RED). F261 bears the Phenylalanine amide mark. Positions 263–265 (RED) are excised as a propeptide. At F269 the chain carries Phenylalanine amide. Residues 271 to 273 (RED) constitute a propeptide that is removed on maturation. F277 is modified (phenylalanine amide). Residues 279-281 (REL) constitute a propeptide that is removed on maturation. The residue at position 285 (F285) is a Phenylalanine amide. Residues 287 to 289 (REF) constitute a propeptide that is removed on maturation. Phenylalanine amide is present on F293. A propeptide spanning residues 295–297 (RED) is cleaved from the precursor. Residue F301 is modified to Phenylalanine amide. Residues 303-305 (RED) constitute a propeptide that is removed on maturation. The residue at position 309 (F309) is a Phenylalanine amide. A propeptide spanning residues 311-313 (REL) is cleaved from the precursor. Phenylalanine amide is present on F317. Positions 319–321 (RED) are excised as a propeptide. At F325 the chain carries Phenylalanine amide. Positions 327 to 329 (RED) are excised as a propeptide. F333 carries the phenylalanine amide modification. Residues 335 to 342 (REDLAKED) constitute a propeptide that is removed on maturation. Phenylalanine amide is present on F346. Residues 348 to 355 (REDLAKED) constitute a propeptide that is removed on maturation. F359 carries the phenylalanine amide modification. A propeptide spanning residues 361 to 368 (REDIAEAD) is cleaved from the precursor. F372 is subject to Phenylalanine amide. Residues 374 to 435 (RNAAAAAAAA…KSDDALAKTS (62 aa)) constitute a propeptide that is removed on maturation. Residues 398–435 (SDPKPQTRFRDGKDMQEKRKVEKKDKIEKSDDALAKTS) are compositionally biased toward basic and acidic residues.

This sequence belongs to the FARP (FMRFamide related peptide) family.

The protein resides in the secreted. Its function is as follows. Not known but it could act as a transmitter at neuromuscular synapses. This Anthopleura elegantissima (Green aggregating anemone) protein is Antho-RFamide neuropeptides type 1.